Consider the following 260-residue polypeptide: Phosphate import ATP-binding protein PstB (260 aa).

In terms of domain architecture, ABC transporter spans 14–255 (LQIRNLDFFY…PGKKQTEDYI (242 aa)). 46–53 (GPSGCGKS) contacts ATP.

The protein belongs to the ABC transporter superfamily. Phosphate importer (TC 3.A.1.7) family. The complex is composed of two ATP-binding proteins (PstB), two transmembrane proteins (PstC and PstA) and a solute-binding protein (PstS).

The protein localises to the cell inner membrane. The catalysed reaction is phosphate(out) + ATP + H2O = ADP + 2 phosphate(in) + H(+). Its function is as follows. Part of the ABC transporter complex PstSACB involved in phosphate import. Responsible for energy coupling to the transport system. This chain is Phosphate import ATP-binding protein PstB, found in Thiobacillus denitrificans (strain ATCC 25259 / T1).